The chain runs to 234 residues: Large ribosomal subunit protein uL1 (234 aa).

It belongs to the universal ribosomal protein uL1 family. As to quaternary structure, part of the 50S ribosomal subunit.

In terms of biological role, binds directly to 23S rRNA. The L1 stalk is quite mobile in the ribosome, and is involved in E site tRNA release. Its function is as follows. Protein L1 is also a translational repressor protein, it controls the translation of the L11 operon by binding to its mRNA. This is Large ribosomal subunit protein uL1 from Geobacter metallireducens (strain ATCC 53774 / DSM 7210 / GS-15).